We begin with the raw amino-acid sequence, 620 residues long: Palmitoyltransferase ZDHHC17 (620 aa).

At 1–292 (MADALVGYEK…LKMDKEFRQK (292 aa)) the chain is on the cytoplasmic side. 6 ANK repeats span residues 77–106 (ENVT…IVDQ), 111–140 (LNST…DPSL), 144–173 (EGCS…DVDM), 177–207 (NGMT…SVNL), 212–241 (HKNT…NVDA), and 245–274 (KGET…AKGY). A run of 2 helical transmembrane segments spans residues 293-313 (VMLG…DLDI) and 314-334 (DSWL…QFLS). The Cytoplasmic portion of the chain corresponds to 335–345 (KSFFDHSMHSA). The chain crosses the membrane as a helical span at residues 346–366 (LPLGIYLATKFWMYITWFYWF). Residues 367–369 (WND) are Lumenal-facing. A helical transmembrane segment spans residues 370–390 (LPFVTIHLPFLLNSLALFYNF). Over 391-469 (GKSWKSDPGI…NCVGSGNHRY (79 aa)) the chain is Cytoplasmic. One can recognise a DHHC domain in the interval 425–475 (IFCSTCLIRKPIRSKHCAVCNRCIAKFDHHCPWVGNCVGSGNHRYFMGYLF). The active-site S-palmitoyl cysteine intermediate is the C455. A helical membrane pass occupies residues 470-490 (FMGYLFFLLCMICWMMYGCIC). Residues 491–504 (YWRIHCATSYTKDG) are Lumenal-facing. Residues 505-524 (FWIYITQIATCSPWMFWMFL) form a helical membrane-spanning segment. The Cytoplasmic portion of the chain corresponds to 525–620 (NSVFHFMWVA…QTSGSGYQLV (96 aa)).

It belongs to the DHHC palmitoyltransferase family. AKR/ZDHHC17 subfamily. In terms of processing, autopalmitoylated.

It is found in the golgi apparatus membrane. The protein resides in the cytoplasmic vesicle membrane. It localises to the presynaptic cell membrane. The enzyme catalyses L-cysteinyl-[protein] + hexadecanoyl-CoA = S-hexadecanoyl-L-cysteinyl-[protein] + CoA. It catalyses the reaction L-cysteinyl-[protein] + tetradecanoyl-CoA = S-tetradecanoyl-L-cysteinyl-[protein] + CoA. The catalysed reaction is L-cysteinyl-[protein] + octadecanoyl-CoA = S-octadecanoyl-L-cysteinyl-[protein] + CoA. Functionally, palmitoyltransferase that catalyzes the addition of palmitate onto various protein substrates and is involved in a variety of cellular processes. Has no stringent fatty acid selectivity and in addition to palmitate can also transfer onto target proteins myristate from tetradecanoyl-CoA and stearate from octadecanoyl-CoA. Plays a role in axonogenesis. In Danio rerio (Zebrafish), this protein is Palmitoyltransferase ZDHHC17.